The chain runs to 443 residues: 5-methylthioadenosine/S-adenosylhomocysteine deaminase (443 aa).

Residues histidine 74 and histidine 76 each contribute to the Zn(2+) site. Substrate contacts are provided by glutamate 103 and histidine 196. Histidine 223 lines the Zn(2+) pocket. Substrate-binding residues include glutamate 226 and aspartate 311. Aspartate 311 lines the Zn(2+) pocket.

Belongs to the metallo-dependent hydrolases superfamily. MTA/SAH deaminase family. The cofactor is Zn(2+).

It catalyses the reaction S-adenosyl-L-homocysteine + H2O + H(+) = S-inosyl-L-homocysteine + NH4(+). The catalysed reaction is S-methyl-5'-thioadenosine + H2O + H(+) = S-methyl-5'-thioinosine + NH4(+). Its function is as follows. Catalyzes the deamination of 5-methylthioadenosine and S-adenosyl-L-homocysteine into 5-methylthioinosine and S-inosyl-L-homocysteine, respectively. Is also able to deaminate adenosine. The polypeptide is 5-methylthioadenosine/S-adenosylhomocysteine deaminase (Haloquadratum walsbyi (strain DSM 16790 / HBSQ001)).